We begin with the raw amino-acid sequence, 286 residues long: Phycobilisome 32.1 kDa linker polypeptide, phycocyanin-associated, rod (286 aa).

The 179-residue stretch at 2–180 folds into the PBS-linker domain; that stretch reads AITTAASRLG…LYRGYANSDR (179 aa). Residues 234 to 286 form the CpcD-like domain; the sequence is DRVYRLEVTGIRSPGYPSVRRSSTVFIVPYERLSDKIQQVHKQGGKIVSVTSA.

This sequence belongs to the phycobilisome linker protein family. As to quaternary structure, associated with the phycobilisome, a hemidiscoidal structure that is composed of two distinct substructures: a core complex and a number of rods radiating from the core.

It localises to the cellular thylakoid membrane. Functionally, rod linker protein, associated with phycocyanin. Linker polypeptides determine the state of aggregation and the location of the disk-shaped phycobiliprotein units within the phycobilisome and modulate their spectroscopic properties in order to mediate a directed and optimal energy transfer. This is Phycobilisome 32.1 kDa linker polypeptide, phycocyanin-associated, rod (cpcC) from Nostoc sp. (strain PCC 7120 / SAG 25.82 / UTEX 2576).